The sequence spans 438 residues: Thymidine phosphorylase (438 aa).

Belongs to the thymidine/pyrimidine-nucleoside phosphorylase family. In terms of assembly, homodimer.

It carries out the reaction thymidine + phosphate = 2-deoxy-alpha-D-ribose 1-phosphate + thymine. The protein operates within pyrimidine metabolism; dTMP biosynthesis via salvage pathway; dTMP from thymine: step 1/2. In terms of biological role, the enzymes which catalyze the reversible phosphorolysis of pyrimidine nucleosides are involved in the degradation of these compounds and in their utilization as carbon and energy sources, or in the rescue of pyrimidine bases for nucleotide synthesis. The protein is Thymidine phosphorylase of Burkholderia orbicola (strain MC0-3).